A 100-amino-acid chain; its full sequence is Large ribosomal subunit protein uL23 (100 aa).

It belongs to the universal ribosomal protein uL23 family. Part of the 50S ribosomal subunit. Contacts protein L29, and trigger factor when it is bound to the ribosome.

Functionally, one of the early assembly proteins it binds 23S rRNA. One of the proteins that surrounds the polypeptide exit tunnel on the outside of the ribosome. Forms the main docking site for trigger factor binding to the ribosome. The protein is Large ribosomal subunit protein uL23 of Photobacterium profundum (strain SS9).